The chain runs to 373 residues: Peptide chain release factor subunit 1 (373 aa).

This sequence belongs to the eukaryotic release factor 1 family. In terms of assembly, heterodimer of two subunits, one of which binds GTP.

The protein resides in the cytoplasm. Functionally, directs the termination of nascent peptide synthesis (translation) in response to the termination codons UAA, UAG and UGA. This Aeropyrum pernix (strain ATCC 700893 / DSM 11879 / JCM 9820 / NBRC 100138 / K1) protein is Peptide chain release factor subunit 1 (prf1).